The chain runs to 543 residues: Glutamyl-tRNA(Gln) amidotransferase subunit A, chloroplastic/mitochondrial (543 aa).

Catalysis depends on charge relay system residues Lys121 and Ser196. Ser220 functions as the Acyl-ester intermediate in the catalytic mechanism.

Belongs to the amidase family. GatA subfamily. Subunit of the heterotrimeric GatCAB amidotransferase (AdT) complex, composed of A, B and C subunits.

The protein localises to the mitochondrion. Its subcellular location is the plastid. It is found in the chloroplast stroma. It carries out the reaction L-glutamyl-tRNA(Gln) + L-glutamine + ATP + H2O = L-glutaminyl-tRNA(Gln) + L-glutamate + ADP + phosphate + H(+). Functionally, allows the formation of correctly charged Gln-tRNA(Gln) through the transamidation of misacylated Glu-tRNA(Gln) in chloroplasts and mitochondria. The reaction takes place in the presence of glutamine and ATP through an activated gamma-phospho-Glu-tRNA(Gln). This is Glutamyl-tRNA(Gln) amidotransferase subunit A, chloroplastic/mitochondrial from Zea mays (Maize).